The sequence spans 315 residues: Aspartate carbamoyltransferase catalytic subunit (315 aa).

Carbamoyl phosphate contacts are provided by Arg65 and Thr66. Lys93 is a binding site for L-aspartate. Carbamoyl phosphate is bound by residues Arg115, His145, and Gln148. 2 residues coordinate L-aspartate: Arg179 and Arg234. Carbamoyl phosphate-binding residues include Gly275 and Pro276.

Belongs to the aspartate/ornithine carbamoyltransferase superfamily. ATCase family. In terms of assembly, heterododecamer (2C3:3R2) of six catalytic PyrB chains organized as two trimers (C3), and six regulatory PyrI chains organized as three dimers (R2).

The enzyme catalyses carbamoyl phosphate + L-aspartate = N-carbamoyl-L-aspartate + phosphate + H(+). It functions in the pathway pyrimidine metabolism; UMP biosynthesis via de novo pathway; (S)-dihydroorotate from bicarbonate: step 2/3. Catalyzes the condensation of carbamoyl phosphate and aspartate to form carbamoyl aspartate and inorganic phosphate, the committed step in the de novo pyrimidine nucleotide biosynthesis pathway. The sequence is that of Aspartate carbamoyltransferase catalytic subunit from Xanthomonas euvesicatoria pv. vesicatoria (strain 85-10) (Xanthomonas campestris pv. vesicatoria).